A 446-amino-acid polypeptide reads, in one-letter code: Methylenetetrahydrofolate--tRNA-(uracil-5-)-methyltransferase TrmFO (446 aa).

FAD is bound at residue 9–14 (GGGMAG).

Belongs to the MnmG family. TrmFO subfamily. FAD is required as a cofactor.

It localises to the cytoplasm. The catalysed reaction is uridine(54) in tRNA + (6R)-5,10-methylene-5,6,7,8-tetrahydrofolate + NADH + H(+) = 5-methyluridine(54) in tRNA + (6S)-5,6,7,8-tetrahydrofolate + NAD(+). The enzyme catalyses uridine(54) in tRNA + (6R)-5,10-methylene-5,6,7,8-tetrahydrofolate + NADPH + H(+) = 5-methyluridine(54) in tRNA + (6S)-5,6,7,8-tetrahydrofolate + NADP(+). In terms of biological role, catalyzes the folate-dependent formation of 5-methyl-uridine at position 54 (M-5-U54) in all tRNAs. In Ruegeria sp. (strain TM1040) (Silicibacter sp.), this protein is Methylenetetrahydrofolate--tRNA-(uracil-5-)-methyltransferase TrmFO.